The primary structure comprises 1574 residues: Myosin-2 (1574 aa).

Ser-2 bears the N-acetylserine mark. The Myosin N-terminal SH3-like domain occupies 4-57 (EVGTRCWYPHKELGWIGAEVIKNEFNDGKYHLELQLEDDEIVSVDTKDLNNDKD). The region spanning 70–781 (EATEDLTSLS…MLAYLEKLRS (712 aa)) is the Myosin motor domain. 164–171 (GESGAGKT) contributes to the ATP binding site. The actin-binding stretch occupies residues 443 to 523 (FIGVLDIYGF…LGILSLLDEE (81 aa)). IQ domains are found at residues 784-806 (MHNSIVMIQKKIRAKYYRKQYLQ), 807-831 (ISQAIKYLQNNIKGFIIRQRVNDEM), 832-855 (KVNCATLLQAAYRGHSIRANVFSV), 856-879 (LRTITNLQKKIRKELKQRQLKQEH), 880-902 (EYNAAVTIQSKVRTFEPRSRFLR), and 903-932 (TKKDTVVVQSLIRRRAAQRKLKQLKADAKS). Residues 933 to 1088 (VNHLKEVSYK…RLQTAMSLGT (156 aa)) are a coiled coil. The tract at residues 1087-1574 (GTVTTSVLPQ…VAQQVVQDGH (488 aa)) is non alpha-helical, tail domain. Thr-1097 carries the post-translational modification Phosphothreonine. At Ser-1121 the chain carries Phosphoserine. The Dilute domain occupies 1226-1501 (AQVLTTIQKV…LRYVADIVKK (276 aa)).

The protein belongs to the TRAFAC class myosin-kinesin ATPase superfamily. Myosin family. Homodimer. Interacts with calmodulin (CMD1) and the myosin light chain MLC1 through its IQ repeats. Binds to the membrane receptors SEC4 and VAC17 to transport secretory vesicles and the vacuole, respectively. Binds to KAR9, which transports BIM1-coated cytoplasmic microtubules that are attached to the spindle pole body into the emerging bud, thereby correctly orienting the mitotic spindle. Interacts with YPT11 and MMR1 to accelerate mitochondrial distribution to the bud. Interacts with SHE4 and localizes it to the bud tip. Interacts with RHO3 and SMY1, putative regulators of MYO2 function. Interacts with SRO7.

It is found in the bud neck. Its subcellular location is the bud tip. In terms of biological role, myosin heavy chain that is required for the cell cycle-regulated transport of various organelles and proteins for their segregation. Functions by binding with its tail domain to receptor proteins on organelles and exerting force with its N-terminal motor domain against actin filaments, thereby transporting its cargo along polarized actin cables. Essential for the delivery of secretory vesicles to sites of active growth during bud emergence and cytokinesis. Required for segregation and inheritance of peroxisomes, late Golgi compartments, mitochondria and the vacuole to the daughter cell during cell division. Also required for correct alignment of the spindle during mitosis. This Saccharomyces cerevisiae (strain ATCC 204508 / S288c) (Baker's yeast) protein is Myosin-2 (MYO2).